Consider the following 128-residue polypeptide: Histone H2A type 1-H (128 aa).

Residues 1-22 are disordered; that stretch reads MSGRGKQGGKARAKAKTRSSRA. Residue Ser2 is modified to N-acetylserine. Ser2 is modified (phosphoserine; by RPS6KA5). Arg4 carries the citrulline; alternate modification. Symmetric dimethylarginine; by PRMT5; alternate is present on Arg4. N6-(2-hydroxyisobutyryl)lysine; alternate is present on residues Lys6 and Lys10. An N6-(beta-hydroxybutyryl)lysine; alternate modification is found at Lys6. Over residues 7 to 19 the composition is skewed to basic residues; sequence QGGKARAKAKTRS. Lys10 is modified (N6-lactoyllysine; alternate). An N6-succinyllysine; alternate modification is found at Lys10. Residues Lys14 and Lys16 each participate in a glycyl lysine isopeptide (Lys-Gly) (interchain with G-Cter in ubiquitin) cross-link. Lys37 is subject to N6-(2-hydroxyisobutyryl)lysine; alternate. N6-(beta-hydroxybutyryl)lysine; alternate is present on Lys37. Lys37 is modified (N6-crotonyllysine; alternate). Residues Lys75 and Lys76 each carry the N6-(2-hydroxyisobutyryl)lysine modification. Position 96 is an N6-(2-hydroxyisobutyryl)lysine; alternate (Lys96). Lys96 carries the N6-succinyllysine; alternate modification. The residue at position 96 (Lys96) is an N6-glutaryllysine; alternate. Gln105 is modified (N5-methylglutamine). At Lys119 the chain carries N6-(2-hydroxyisobutyryl)lysine; alternate. Residues Lys119 and Lys120 each carry the N6-crotonyllysine; alternate modification. Residues Lys119 and Lys120 each carry the N6-glutaryllysine; alternate modification. Lys120 bears the N6-(beta-hydroxybutyryl)lysine; alternate mark. Lys120 is covalently cross-linked (Glycyl lysine isopeptide (Lys-Gly) (interchain with G-Cter in ubiquitin); alternate). Thr121 carries the post-translational modification Phosphothreonine; by DCAF1. An N6-(beta-hydroxybutyryl)lysine; alternate modification is found at Lys126. N6-crotonyllysine; alternate is present on Lys126. At Lys126 the chain carries N6-glutaryllysine; alternate.

This sequence belongs to the histone H2A family. In terms of assembly, the nucleosome is a histone octamer containing two molecules each of H2A, H2B, H3 and H4 assembled in one H3-H4 heterotetramer and two H2A-H2B heterodimers. The octamer wraps approximately 147 bp of DNA. Deiminated on Arg-4 in granulocytes upon calcium entry. Post-translationally, monoubiquitination of Lys-120 (H2AK119Ub) by RING1, TRIM37 and RNF2/RING2 complex gives a specific tag for epigenetic transcriptional repression and participates in X chromosome inactivation of female mammals. It is involved in the initiation of both imprinted and random X inactivation. Ubiquitinated H2A is enriched in inactive X chromosome chromatin. Ubiquitination of H2A functions downstream of methylation of 'Lys-27' of histone H3 (H3K27me). H2AK119Ub by RNF2/RING2 can also be induced by ultraviolet and may be involved in DNA repair. Following DNA double-strand breaks (DSBs), it is ubiquitinated through 'Lys-63' linkage of ubiquitin moieties by the E2 ligase UBE2N and the E3 ligases RNF8 and RNF168, leading to the recruitment of repair proteins to sites of DNA damage. Ubiquitination at Lys-14 and Lys-16 (H2AK13Ub and H2AK15Ub, respectively) in response to DNA damage is initiated by RNF168 that mediates monoubiquitination at these 2 sites, and 'Lys-63'-linked ubiquitin are then conjugated to monoubiquitin; RNF8 is able to extend 'Lys-63'-linked ubiquitin chains in vitro. H2AK119Ub and ionizing radiation-induced 'Lys-63'-linked ubiquitination (H2AK13Ub and H2AK15Ub) are distinct events. In terms of processing, phosphorylation on Ser-2 (H2AS1ph) is enhanced during mitosis. Phosphorylation on Ser-2 by RPS6KA5/MSK1 directly represses transcription. Acetylation of H3 inhibits Ser-2 phosphorylation by RPS6KA5/MSK1. Phosphorylation at Thr-121 (H2AT120ph) by DCAF1 is present in the regulatory region of many tumor suppresor genes and down-regulates their transcription. Symmetric dimethylation on Arg-4 by the PRDM1/PRMT5 complex may play a crucial role in the germ-cell lineage. Post-translationally, glutamine methylation at Gln-105 (H2AQ104me) by FBL is specifically dedicated to polymerase I. It is present at 35S ribosomal DNA locus and impairs binding of the FACT complex. In terms of processing, crotonylation (Kcr) is specifically present in male germ cells and marks testis-specific genes in post-meiotic cells, including X-linked genes that escape sex chromosome inactivation in haploid cells. Crotonylation marks active promoters and enhancers and confers resistance to transcriptional repressors. It is also associated with post-meiotically activated genes on autosomes. Hydroxybutyrylation of histones is induced by starvation. Post-translationally, lactylated in macrophages by EP300/P300 by using lactoyl-CoA directly derived from endogenous or exogenous lactate, leading to stimulates gene transcription.

It is found in the nucleus. The protein localises to the chromosome. Functionally, core component of nucleosome. Nucleosomes wrap and compact DNA into chromatin, limiting DNA accessibility to the cellular machineries which require DNA as a template. Histones thereby play a central role in transcription regulation, DNA repair, DNA replication and chromosomal stability. DNA accessibility is regulated via a complex set of post-translational modifications of histones, also called histone code, and nucleosome remodeling. The protein is Histone H2A type 1-H of Mus musculus (Mouse).